Reading from the N-terminus, the 163-residue chain is 2-C-methyl-D-erythritol 2,4-cyclodiphosphate synthase (163 aa).

Positions 15 and 17 each coordinate a divalent metal cation. 4-CDP-2-C-methyl-D-erythritol 2-phosphate is bound by residues 15 to 17 (DFH) and 41 to 42 (HS). H49 is a binding site for a divalent metal cation. 4-CDP-2-C-methyl-D-erythritol 2-phosphate contacts are provided by residues 63–65 (DIG) and 139–142 (TTNE).

It belongs to the IspF family. In terms of assembly, homotrimer. Requires a divalent metal cation as cofactor.

It carries out the reaction 4-CDP-2-C-methyl-D-erythritol 2-phosphate = 2-C-methyl-D-erythritol 2,4-cyclic diphosphate + CMP. It participates in isoprenoid biosynthesis; isopentenyl diphosphate biosynthesis via DXP pathway; isopentenyl diphosphate from 1-deoxy-D-xylulose 5-phosphate: step 4/6. Functionally, involved in the biosynthesis of isopentenyl diphosphate (IPP) and dimethylallyl diphosphate (DMAPP), two major building blocks of isoprenoid compounds. Catalyzes the conversion of 4-diphosphocytidyl-2-C-methyl-D-erythritol 2-phosphate (CDP-ME2P) to 2-C-methyl-D-erythritol 2,4-cyclodiphosphate (ME-CPP) with a corresponding release of cytidine 5-monophosphate (CMP). In Gloeobacter violaceus (strain ATCC 29082 / PCC 7421), this protein is 2-C-methyl-D-erythritol 2,4-cyclodiphosphate synthase.